The following is a 492-amino-acid chain: Aerolysin (492 aa).

The first 21 residues, M1–T21, serve as a signal peptide directing secretion. 2 disulfide bridges follow: C42-C98 and C182-C187. The interval W68–Y84 is interaction with host N-linked glycan. The segment at Y256 to W288 is part of the transmembrane beta-barrel after proteolytic activation of the toxin and insertion into the host membrane. The interval R346–H355 is interaction with glycans from host GPI-anchor. Positions G446–N492 are excised as a propeptide.

This sequence belongs to the aerolysin family. As to quaternary structure, homodimer in solution; homoheptamer in the host membrane. After binding to GPI-anchored proteins in target membranes and proteolytic removal of the C-terminal propeptide, the protein assembles into a heptameric pre-pore complex. A further conformation change leads to insertion into the host membrane. Proteolytic cleavage and subsequent release of the propeptide trigger a major conformation change, leading to the formation of a heptameric pre-pore that then inserts into the host membrane.

The protein localises to the secreted. It is found in the host cell membrane. Secreted, cytolytic toxin that forms pores in host membranes after proteolytic removal of a C-terminal propeptide, leading to destruction of the membrane permeability barrier and cell death. The pores are formed by transmembrane beta-strands and are approximately 3 nm in diameter. This chain is Aerolysin (aerA), found in Aeromonas enteropelogenes (Aeromonas trota).